Here is a 165-residue protein sequence, read N- to C-terminus: NADPH-dependent 7-cyano-7-deazaguanine reductase (165 aa).

Cys-56 acts as the Thioimide intermediate in catalysis. Asp-63 functions as the Proton donor in the catalytic mechanism. Residues 78-80 (VES) and 97-98 (HE) each bind substrate.

This sequence belongs to the GTP cyclohydrolase I family. QueF type 1 subfamily.

Its subcellular location is the cytoplasm. The catalysed reaction is 7-aminomethyl-7-carbaguanine + 2 NADP(+) = 7-cyano-7-deazaguanine + 2 NADPH + 3 H(+). It participates in tRNA modification; tRNA-queuosine biosynthesis. Functionally, catalyzes the NADPH-dependent reduction of 7-cyano-7-deazaguanine (preQ0) to 7-aminomethyl-7-deazaguanine (preQ1). The sequence is that of NADPH-dependent 7-cyano-7-deazaguanine reductase from Bacillus licheniformis (strain ATCC 14580 / DSM 13 / JCM 2505 / CCUG 7422 / NBRC 12200 / NCIMB 9375 / NCTC 10341 / NRRL NRS-1264 / Gibson 46).